Consider the following 305-residue polypeptide: tRNA dimethylallyltransferase (305 aa).

8-15 (GPTAVGKT) contacts ATP. 10 to 15 (TAVGKT) contributes to the substrate binding site. An interaction with substrate tRNA region spans residues 33–36 (DSRQ).

Belongs to the IPP transferase family. As to quaternary structure, monomer. The cofactor is Mg(2+).

It carries out the reaction adenosine(37) in tRNA + dimethylallyl diphosphate = N(6)-dimethylallyladenosine(37) in tRNA + diphosphate. Catalyzes the transfer of a dimethylallyl group onto the adenine at position 37 in tRNAs that read codons beginning with uridine, leading to the formation of N6-(dimethylallyl)adenosine (i(6)A). This chain is tRNA dimethylallyltransferase, found in Thermotoga maritima (strain ATCC 43589 / DSM 3109 / JCM 10099 / NBRC 100826 / MSB8).